A 240-amino-acid polypeptide reads, in one-letter code: Uridylate kinase (240 aa).

12–15 (KLSG) contacts ATP. Residue G54 coordinates UMP. Residues G55 and R59 each coordinate ATP. UMP is bound by residues D74 and 135-142 (TGNPFFTT). Residues T162, Y168, and D171 each contribute to the ATP site.

This sequence belongs to the UMP kinase family. Homohexamer.

The protein localises to the cytoplasm. It catalyses the reaction UMP + ATP = UDP + ADP. The protein operates within pyrimidine metabolism; CTP biosynthesis via de novo pathway; UDP from UMP (UMPK route): step 1/1. Its activity is regulated as follows. Inhibited by UTP. Its function is as follows. Catalyzes the reversible phosphorylation of UMP to UDP. The sequence is that of Uridylate kinase from Xanthomonas campestris pv. campestris (strain ATCC 33913 / DSM 3586 / NCPPB 528 / LMG 568 / P 25).